A 282-amino-acid chain; its full sequence is MMPGAPSPSAPSIALNDENTMPVLGMGVAGLSDDETERAVSAALEIGCRLIDTAAAYGNEAAVGRALAASGIPRAELFVTTKVATADHGFTASREACKASLDRLGLDYVDLYLIHWPAPAVGKYVDAFGGLIQARGEGFTRSIGVSNFTEEHVSNVIDLTFVTPAVNQVELHPLLNQDELRKANAQHNVVTQSYTPLALGQLADNPTVTSIAGEYGKTPTQVLLRWNLQLGNAVIFGSSNAEHIVTNLDVFEFELASQHMDAINGLNDGTRLREDPMTFAGV.

Tyr-57 acts as the Proton donor in catalysis. NADPH contacts are provided by Leu-197, Ile-235, Ser-238, Thr-246, Asn-247, and Arg-273.

It belongs to the aldo/keto reductase family.

This Mycobacterium ulcerans (strain Agy99) protein is Aldo-keto reductase MUL_1987.